We begin with the raw amino-acid sequence, 244 residues long: ATP synthase subunit 4, mitochondrial (244 aa).

The transit peptide at 1-36 directs the protein to the mitochondrion; the sequence is MSSKLFCLRSFPSVQRTAWQRLVLPSTRKFSLTPTT.

Belongs to the eukaryotic ATPase B chain family. In terms of assembly, F-type ATPases have 2 components, CF(1) - the catalytic core - and CF(0) - the membrane proton channel. In yeast, the dimeric form of ATP synthase consists of 17 polypeptides: alpha, beta, gamma, delta, epsilon, 4 (B), 5 (OSCP), 6 (A), 8, 9 (C), d, E (Tim11), f, g, h, i/j and k.

The protein resides in the mitochondrion. It is found in the mitochondrion inner membrane. Its function is as follows. Mitochondrial membrane ATP synthase (F(1)F(0) ATP synthase or Complex V) produces ATP from ADP in the presence of a proton gradient across the membrane which is generated by electron transport complexes of the respiratory chain. F-type ATPases consist of two structural domains, F(1) - containing the extramembraneous catalytic core, and F(0) - containing the membrane proton channel, linked together by a central stalk and a peripheral stalk. During catalysis, ATP synthesis in the catalytic domain of F(1) is coupled via a rotary mechanism of the central stalk subunits to proton translocation. Part of the complex F(0) domain and the peripheric stalk, which acts as a stator to hold the catalytic alpha(3)beta(3) subcomplex and subunit a/ATP6 static relative to the rotary elements. This is ATP synthase subunit 4, mitochondrial (atp4) from Schizosaccharomyces pombe (strain 972 / ATCC 24843) (Fission yeast).